The chain runs to 308 residues: Ornithine carbamoyltransferase (308 aa).

Carbamoyl phosphate is bound by residues Ser-56–Thr-59, Gln-83, Arg-107, and His-134–Gln-137. L-ornithine-binding positions include Asn-165, Asp-225, and Ser-229 to Met-230. Residues Cys-266–Leu-267 and Arg-294 each bind carbamoyl phosphate.

It belongs to the aspartate/ornithine carbamoyltransferase superfamily. OTCase family.

The protein localises to the cytoplasm. The catalysed reaction is carbamoyl phosphate + L-ornithine = L-citrulline + phosphate + H(+). It participates in amino-acid biosynthesis; L-arginine biosynthesis; L-arginine from L-ornithine and carbamoyl phosphate: step 1/3. Reversibly catalyzes the transfer of the carbamoyl group from carbamoyl phosphate (CP) to the N(epsilon) atom of ornithine (ORN) to produce L-citrulline. This chain is Ornithine carbamoyltransferase, found in Ruegeria pomeroyi (strain ATCC 700808 / DSM 15171 / DSS-3) (Silicibacter pomeroyi).